A 289-amino-acid chain; its full sequence is F-actin-capping protein subunit beta (289 aa).

The disordered stretch occupies residues Arg-73–Met-110. Over residues Gly-87 to Ala-106 the composition is skewed to gly residues.

Belongs to the F-actin-capping protein beta subunit family. In terms of assembly, component of the F-actin capping complex, composed of a heterodimer of an alpha and a beta subunit.

It localises to the cytoplasm. The protein resides in the cytoskeleton. It is found in the actin patch. F-actin-capping proteins bind in a Ca(2+)-independent manner to the fast growing ends of actin filaments (barbed end) thereby blocking the exchange of subunits at these ends. Unlike other capping proteins (such as gelsolin and severin), these proteins do not sever actin filaments. This Neurospora crassa (strain ATCC 24698 / 74-OR23-1A / CBS 708.71 / DSM 1257 / FGSC 987) protein is F-actin-capping protein subunit beta (fac-2).